The following is a 643-amino-acid chain: Fructose-1,6-bisphosphatase class 3 (643 aa).

The protein belongs to the FBPase class 3 family. The cofactor is Mn(2+).

It catalyses the reaction beta-D-fructose 1,6-bisphosphate + H2O = beta-D-fructose 6-phosphate + phosphate. Its pathway is carbohydrate biosynthesis; gluconeogenesis. The polypeptide is Fructose-1,6-bisphosphatase class 3 (Lacticaseibacillus casei (strain BL23) (Lactobacillus casei)).